An 880-amino-acid chain; its full sequence is Inner centromere protein (880 aa).

A disordered region spans residues 52–104 (EPELMPKTPSQKNRRKKRRVSNIQDENRDPVRKRLSRRKSRSSQVGTRHLRSK). Phosphoserine occurs at positions 72, 142, and 147. A phosphothreonine mark is found at T149 and T189. Positions 175 to 229 (KGSLPPSPVSQGTLTSEEELTPKKSEAGKLDSVTVNSLKATPQSPKNRGVGEGRS) are disordered. S190 carries the phosphoserine modification. Over residues 194–203 (LTPKKSEAGK) the composition is skewed to basic and acidic residues. Phosphothreonine is present on residues T195 and T215. Over residues 207–220 (VTVNSLKATPQSPK) the composition is skewed to polar residues. A phosphoserine mark is found at S218, S239, S245, S248, S251, and S259. At T270 the chain carries Phosphothreonine. Phosphoserine is present on residues S284 and S290. Disordered regions lie at residues 303–322 (KQEN…AGKE) and 350–461 (EQEP…PANK). A compositionally biased stretch (acidic residues) spans 352 to 366 (EPVEVAEPEEAEEEQ). Residue S376 is modified to Phosphoserine. T382 is modified (phosphothreonine). Over residues 385–402 (AISTPTSKPAAAGQTTTV) the composition is skewed to polar residues. Position 421 is a phosphoserine (S421). Positions 434 to 445 (EPDEEQLEDEEL) are enriched in acidic residues. N450 carries N-linked (GlcNAc...) asparagine glycosylation. At T452 the chain carries Phosphothreonine. Phosphoserine is present on residues S454 and S488. The SAH stretch occupies residues 506–733 (KCSFVEKERQ…EEKKRKEEQQ (228 aa)). Positions 506 to 759 (KCSFVEKERQ…EVAAARKVLN (254 aa)) form a coiled coil. Disordered regions lie at residues 513 to 541 (ERQR…KRRR), 563 to 617 (VEQM…KQEE), 629 to 713 (EEER…KALR), and 775 to 813 (TPQG…IPSW). Basic and acidic residues-rich tracts occupy residues 563–596 (VEQM…LAEK), 604–617 (KKME…KQEE), and 630–713 (EERR…KALR). Residues 794–868 (LNSDDSTDDE…RTSSAVWNSP (75 aa)) form an IN box region. Phosphoserine occurs at positions 796 and 799. T800 is subject to Phosphothreonine. Residue T860 is modified to Phosphothreonine; by AURKB. 3 positions are modified to phosphoserine: S861, S862, and S867.

The protein belongs to the INCENP family. As to quaternary structure, component of the chromosomal passenger complex (CPC) composed of at least BIRC5/survivin, CDCA8/borealin, INCENP, AURKB or AURKC; in the complex binds directly to AURKB or AURKC via the IN box, and forms a triple-helix bundle-based subcomplex with BIRC5 and CDCA8 via its N-terminus. The reported homodimerization is questioned as the SAH domain is shown to be monomeric. Interacts with H2AZ1. Interacts with CBX1 and CBX3. Interacts with tubulin beta chain. Interacts with EVI5. Interacts with CBX5; POGZ and INCENP compete for interaction with CBX5. Interacts with POGZ. Interacts with JTB. Phosphorylation by AURKB at its C-terminal part is important for AURKB activation by INCENP.

The protein resides in the chromosome. It is found in the centromere. The protein localises to the cytoplasm. It localises to the cytoskeleton. Its subcellular location is the spindle. The protein resides in the nucleus. It is found in the kinetochore. The protein localises to the midbody. Its function is as follows. Component of the chromosomal passenger complex (CPC), a complex that acts as a key regulator of mitosis. The CPC complex has essential functions at the centromere in ensuring correct chromosome alignment and segregation and is required for chromatin-induced microtubule stabilization and spindle assembly. Acts as a scaffold regulating CPC localization and activity. The C-terminus associates with AURKB or AURKC, the N-terminus associated with BIRC5/survivin and CDCA8/borealin tethers the CPC to the inner centromere, and the microtubule binding activity within the central SAH domain directs AURKB/C toward substrates near microtubules. The flexibility of the SAH domain is proposed to allow AURKB/C to follow substrates on dynamic microtubules while ensuring CPC docking to static chromatin. Activates AURKB and AURKC. Controls the kinetochore localization of BUB1. The protein is Inner centromere protein (Incenp) of Mus musculus (Mouse).